The sequence spans 277 residues: Ribosomal RNA small subunit methyltransferase A (277 aa).

The S-adenosyl-L-methionine site is built by His20, Leu22, Gly47, Glu71, Asp94, and Asn116.

This sequence belongs to the class I-like SAM-binding methyltransferase superfamily. rRNA adenine N(6)-methyltransferase family. RsmA subfamily.

The protein resides in the cytoplasm. It catalyses the reaction adenosine(1518)/adenosine(1519) in 16S rRNA + 4 S-adenosyl-L-methionine = N(6)-dimethyladenosine(1518)/N(6)-dimethyladenosine(1519) in 16S rRNA + 4 S-adenosyl-L-homocysteine + 4 H(+). Specifically dimethylates two adjacent adenosines (A1518 and A1519) in the loop of a conserved hairpin near the 3'-end of 16S rRNA in the 30S particle. May play a critical role in biogenesis of 30S subunits. This chain is Ribosomal RNA small subunit methyltransferase A, found in Burkholderia sp.